Here is a 155-residue protein sequence, read N- to C-terminus: Large ribosomal subunit protein uL22 (155 aa).

The protein belongs to the universal ribosomal protein uL22 family. As to quaternary structure, part of the 50S ribosomal subunit. Contacts the macrolide antibiotic tylosin in the polypeptide exit tunnel.

Its function is as follows. This protein binds specifically to 23S rRNA. It makes multiple contacts with different domains of the 23S rRNA in the assembled 50S subunit and ribosome. Contacts all 6 domains of the 23S rRNA, helping stabilize their relative orientation. An extended beta-hairpin in the C-terminus forms part of the polypeptide exit tunnel, in which it helps forms a bend with protein L4, while most of the rest of the protein is located at the polypeptide exit tunnel on the outside of the subunit. This Haloarcula marismortui (strain ATCC 43049 / DSM 3752 / JCM 8966 / VKM B-1809) (Halobacterium marismortui) protein is Large ribosomal subunit protein uL22.